The chain runs to 408 residues: Multidrug resistance protein MdtG (408 aa).

The next 11 helical transmembrane spans lie at 16–36 (LIVA…VMPF), 58–78 (IVFS…GGLA), 92–112 (LGMG…QFLI), 115–135 (ALLG…ATQV), 146–166 (TLST…GLLA), 173–193 (PVFF…LFCI), 224–244 (LFVT…ILTL), 256–276 (VAFI…LSAP), 290–310 (ILIT…YVQT), 319–339 (FLLG…LVYN), and 378–398 (AVFL…WNSL).

This sequence belongs to the major facilitator superfamily. DHA1 family. MdtG (TC 2.A.1.2.20) subfamily.

It is found in the cell inner membrane. Its function is as follows. Confers resistance to fosfomycin and deoxycholate. This is Multidrug resistance protein MdtG from Escherichia coli O7:K1 (strain IAI39 / ExPEC).